Here is a 199-residue protein sequence, read N- to C-terminus: Probable chemoreceptor glutamine deamidase CheD (199 aa).

The protein belongs to the CheD family.

The catalysed reaction is L-glutaminyl-[protein] + H2O = L-glutamyl-[protein] + NH4(+). Functionally, probably deamidates glutamine residues to glutamate on methyl-accepting chemotaxis receptors (MCPs), playing an important role in chemotaxis. In Cereibacter sphaeroides (Rhodobacter sphaeroides), this protein is Probable chemoreceptor glutamine deamidase CheD.